A 346-amino-acid polypeptide reads, in one-letter code: Putative agmatine deiminase (346 aa).

Cys333 serves as the catalytic Amidino-cysteine intermediate.

It belongs to the agmatine deiminase family.

It catalyses the reaction agmatine + H2O = N-carbamoylputrescine + NH4(+). The chain is Putative agmatine deiminase from Legionella pneumophila (strain Paris).